Here is a 484-residue protein sequence, read N- to C-terminus: tRNA sulfurtransferase (484 aa).

The region spanning 63-167 is the THUMP domain; it reads ELFAERLAHI…RDKLYMVSQR (105 aa). ATP is bound by residues 185–186, Lys267, Gly289, and Gln298; that span reads LI. Cys346 and Cys458 are disulfide-bonded. The region spanning 406–484 is the Rhodanese domain; it reads AAGNEVIIDI…GYNNVKVYRP (79 aa). Catalysis depends on Cys458, which acts as the Cysteine persulfide intermediate.

The protein belongs to the ThiI family.

The protein resides in the cytoplasm. The catalysed reaction is [ThiI sulfur-carrier protein]-S-sulfanyl-L-cysteine + a uridine in tRNA + 2 reduced [2Fe-2S]-[ferredoxin] + ATP + H(+) = [ThiI sulfur-carrier protein]-L-cysteine + a 4-thiouridine in tRNA + 2 oxidized [2Fe-2S]-[ferredoxin] + AMP + diphosphate. It carries out the reaction [ThiS sulfur-carrier protein]-C-terminal Gly-Gly-AMP + S-sulfanyl-L-cysteinyl-[cysteine desulfurase] + AH2 = [ThiS sulfur-carrier protein]-C-terminal-Gly-aminoethanethioate + L-cysteinyl-[cysteine desulfurase] + A + AMP + 2 H(+). Its pathway is cofactor biosynthesis; thiamine diphosphate biosynthesis. Its function is as follows. Catalyzes the ATP-dependent transfer of a sulfur to tRNA to produce 4-thiouridine in position 8 of tRNAs, which functions as a near-UV photosensor. Also catalyzes the transfer of sulfur to the sulfur carrier protein ThiS, forming ThiS-thiocarboxylate. This is a step in the synthesis of thiazole, in the thiamine biosynthesis pathway. The sulfur is donated as persulfide by IscS. The polypeptide is tRNA sulfurtransferase (Shewanella amazonensis (strain ATCC BAA-1098 / SB2B)).